We begin with the raw amino-acid sequence, 337 residues long: Neurogenic differentiation factor 6 (337 aa).

The interval 43–82 (LRGKSIKRAPGEETEKEEEEEDREEEDENGLPRRRGLRKK) is disordered. Residues 54 to 71 (EETEKEEEEEDREEEDEN) are compositionally biased toward acidic residues. Positions 80–86 (RKKKTTK) match the Nuclear localization signal motif. In terms of domain architecture, bHLH spans 94–146 (FRRQEANARERNRMHGLNDALDNLRKVVPCYSKTQKLSKIETLRLAKNYIWAL).

As to quaternary structure, efficient DNA binding requires dimerization with another bHLH protein.

It localises to the nucleus. Functionally, activates E box-dependent transcription in collaboration with TCF3/E47. May be a trans-acting factor involved in the development and maintenance of the mammalian nervous system. Transactivates the promoter of its own gene. The polypeptide is Neurogenic differentiation factor 6 (NEUROD6) (Homo sapiens (Human)).